We begin with the raw amino-acid sequence, 167 residues long: uncharacterized protein (167 aa).

In terms of domain architecture, N-acetyltransferase spans 1 to 148; it reads MLIRVEIPID…SAFQVHRLAD (148 aa).

The protein belongs to the acetyltransferase family.

This is an uncharacterized protein from Escherichia coli O157:H7.